A 938-amino-acid chain; its full sequence is AP-2 complex subunit alpha-2 (938 aa).

A 1,2-diacyl-sn-glycero-3-phospho-(1D-myo-inositol-3,4,5-trisphosphate) is bound by residues 11 to 12, Lys43, Tyr53, and 57 to 61; these read RG and KYVCK. The tract at residues 615–681 is disordered; that stretch reads LKKKKGPSTV…TGPPPSSGGG (67 aa). A compositionally biased stretch (low complexity) spans 646-667; that stretch reads PASTSAASTPSPSADLLGLGAV. Pro residues predominate over residues 668-677; it reads PPAPTGPPPS.

Belongs to the adaptor complexes large subunit family. In terms of assembly, adaptor protein complex 2 (AP-2) is a heterotetramer composed of two large adaptins (alpha-type subunit AP2A1 or AP2A2 and beta-type subunit AP2B1), a medium adaptin (mu-type subunit AP2M1) and a small adaptin (sigma-type subunit AP2S1). Interacts with clathrin. Binds EPN1, EPS15, AMPH, SNAP91 and BIN1. Interacts with HIP1. Interacts with DGKD. Interacts with DENND1A, DENND1B and DENND1C. Interacts with FCHO1 and DAB2. Interacts with ATAT1; this interaction is required for efficient alpha-tubulin acetylation by ATAT1. Interacts with KIAA1107. Together with AP2B1 and AP2M1, it interacts with ADAM10; this interaction facilitates ADAM10 endocytosis from the plasma membrane during long-term potentiation in hippocampal neurons. Interacts with CLN3 (via dileucine motif). Interacts with ABCB11; this interaction regulates cell membrane expression of ABCB11 through its internalization in a clathrin-dependent manner and its subsequent degradation. Interacts with Cacfd1. Interacts with DNAJC6. In terms of tissue distribution, widely expressed.

It is found in the cell membrane. The protein resides in the membrane. The protein localises to the coated pit. Component of the adaptor protein complex 2 (AP-2). Adaptor protein complexes function in protein transport via transport vesicles in different membrane traffic pathways. Adaptor protein complexes are vesicle coat components and appear to be involved in cargo selection and vesicle formation. AP-2 is involved in clathrin-dependent endocytosis in which cargo proteins are incorporated into vesicles surrounded by clathrin (clathrin-coated vesicles, CCVs) which are destined for fusion with the early endosome. The clathrin lattice serves as a mechanical scaffold but is itself unable to bind directly to membrane components. Clathrin-associated adaptor protein (AP) complexes which can bind directly to both the clathrin lattice and to the lipid and protein components of membranes are considered to be the major clathrin adaptors contributing the CCV formation. AP-2 also serves as a cargo receptor to selectively sort the membrane proteins involved in receptor-mediated endocytosis. AP-2 seems to play a role in the recycling of synaptic vesicle membranes from the presynaptic surface. AP-2 recognizes Y-X-X-[FILMV] (Y-X-X-Phi) and [ED]-X-X-X-L-[LI] endocytosis signal motifs within the cytosolic tails of transmembrane cargo molecules. AP-2 may also play a role in maintaining normal post-endocytic trafficking through the ARF6-regulated, non-clathrin pathway. During long-term potentiation in hippocampal neurons, AP-2 is responsible for the endocytosis of ADAM10. The AP-2 alpha subunit binds polyphosphoinositide-containing lipids, positioning AP-2 on the membrane. The AP-2 alpha subunit acts via its C-terminal appendage domain as a scaffolding platform for endocytic accessory proteins. The AP-2 alpha and AP-2 sigma subunits are thought to contribute to the recognition of the [ED]-X-X-X-L-[LI] motif. In Rattus norvegicus (Rat), this protein is AP-2 complex subunit alpha-2.